Here is a 282-residue protein sequence, read N- to C-terminus: 4-diphosphocytidyl-2-C-methyl-D-erythritol kinase (282 aa).

The active site involves Lys-11. 95 to 105 is an ATP binding site; it reads PMGGGVGGGSS. Asp-137 is a catalytic residue.

Belongs to the GHMP kinase family. IspE subfamily.

The enzyme catalyses 4-CDP-2-C-methyl-D-erythritol + ATP = 4-CDP-2-C-methyl-D-erythritol 2-phosphate + ADP + H(+). It participates in isoprenoid biosynthesis; isopentenyl diphosphate biosynthesis via DXP pathway; isopentenyl diphosphate from 1-deoxy-D-xylulose 5-phosphate: step 3/6. In terms of biological role, catalyzes the phosphorylation of the position 2 hydroxy group of 4-diphosphocytidyl-2C-methyl-D-erythritol. This chain is 4-diphosphocytidyl-2-C-methyl-D-erythritol kinase, found in Haemophilus ducreyi (strain 35000HP / ATCC 700724).